Here is a 177-residue protein sequence, read N- to C-terminus: Interleukin-7 (177 aa).

The first 25 residues, 1 to 25 (MFHVSFRYIFGLPPLILVLLPVASS), serve as a signal peptide directing secretion. 3 disulfides stabilise this stretch: cysteine 27-cysteine 166, cysteine 59-cysteine 154, and cysteine 72-cysteine 117. Residues asparagine 95, asparagine 116, and asparagine 141 are each glycosylated (N-linked (GlcNAc...) asparagine).

This sequence belongs to the IL-7/IL-9 family. As to quaternary structure, interacts with IL7R and CSF2RG.

The protein resides in the secreted. In terms of biological role, hematopoietic cytokine that plays an essential role in the development, expansion, and survival of naive and memory T-cells and B-cells thereby regulating the number of mature lymphocytes and maintaining lymphoid homeostasis. Mechanistically, exerts its biological effects through a receptor composed of IL7RA subunit and the cytokine receptor common subunit gamma/CSF2RG. Binding to the receptor leads to activation of various kinases including JAK1 or JAK3 depending on the cell type and subsequently propagation of signals through activation of several downstream signaling pathways including the PI3K/Akt/mTOR or the JAK-STAT5. The chain is Interleukin-7 (IL7) from Homo sapiens (Human).